We begin with the raw amino-acid sequence, 85 residues long: Small ribosomal subunit protein bS20 (85 aa).

2 disordered regions span residues 1–25 (MANIKSAIKRAKLSEERRAHNASIK) and 62–85 (ARKGLIHQNAASRQKSRLAKQVNA).

Belongs to the bacterial ribosomal protein bS20 family.

Binds directly to 16S ribosomal RNA. In Bacillus cereus (strain G9842), this protein is Small ribosomal subunit protein bS20.